The chain runs to 544 residues: Probable protein kinase UbiB (544 aa).

The Protein kinase domain maps to 123 to 501 (DFDLVPLASA…KRQQATGKFL (379 aa)). ATP-binding positions include 129–137 (LASASIAQV) and lysine 152. Residue aspartate 287 is the Proton acceptor of the active site. Transmembrane regions (helical) follow at residues 496-516 (ATGKFLFGVGATLVVCSAILV) and 519-539 (TYEQLSLATAIAGVTFWLFSW).

Belongs to the ABC1 family. UbiB subfamily.

The protein localises to the cell inner membrane. It participates in cofactor biosynthesis; ubiquinone biosynthesis [regulation]. Its function is as follows. Is probably a protein kinase regulator of UbiI activity which is involved in aerobic coenzyme Q (ubiquinone) biosynthesis. This is Probable protein kinase UbiB from Vibrio vulnificus (strain CMCP6).